Here is a 29-residue protein sequence, read N- to C-terminus: GDLPICGETCFGGTCNTPGCVCAWPVCNR.

The cyclopeptide (Gly-Arg) cross-link spans 1–29 (GDLPICGETCFGGTCNTPGCVCAWPVCNR). 3 disulfides stabilise this stretch: C6/C20, C10/C22, and C15/C27.

In terms of processing, this is a cyclic peptide.

Functionally, probably participates in a plant defense mechanism. The chain is Cyclotide psyleio B from Psychotria brachyceras.